A 130-amino-acid polypeptide reads, in one-letter code: Small ribosomal subunit protein uS9 (130 aa).

This sequence belongs to the universal ribosomal protein uS9 family.

This is Small ribosomal subunit protein uS9 from Ectopseudomonas mendocina (strain ymp) (Pseudomonas mendocina).